The primary structure comprises 1052 residues: Kruppel-like factor 18 (1052 aa).

3 C2H2-type zinc fingers span residues 964–988 (YVCT…MRKH), 994–1018 (YVCD…KKRH), and 1024–1046 (YLCS…AKVH).

This sequence belongs to the krueppel C2H2-type zinc-finger protein family.

It localises to the nucleus. This Homo sapiens (Human) protein is Kruppel-like factor 18.